The chain runs to 339 residues: F-box protein At3g22700 (339 aa).

Residues 1-49 (MMSNLPLDLVEEILSRVPATSLKRLRSTCRQWNALLKDRRFTEKHFRKA) enclose the F-box domain.

This is F-box protein At3g22700 from Arabidopsis thaliana (Mouse-ear cress).